The primary structure comprises 291 residues: MTVTRVVDTSCRLGEGPVWHPDEKRLYWVDIESGRLHRYDPETGAHDCPVETSVIAGVTIQRDGSLLAFMDRGRVGRVVDGDRRESARIVDSPTRFNDVIADPAGRVFCGTMPSDTAGGRLFRLDTDGTVTTVETGVGIPNGMGFTRDRERFYFTETEARTVYRYAYDEETGAVSARERFVESPETPGLPDGMTVDSAGHIWSARWEGGCVVEYDADGTELGRFDVPTEKVTSVAFGGPDLDSLYVTTAGGDGDGSAGEGDESTGDAAGALFRLDVAATGRPEFRSDVRLG.

Residues glutamate 15, asparagine 141, and aspartate 191 each contribute to the a divalent metal cation site. The active-site Proton donor/acceptor is aspartate 191.

The protein belongs to the SMP-30/CGR1 family. As to quaternary structure, monomer. A divalent metal cation serves as cofactor.

It carries out the reaction L-arabinono-1,4-lactone + H2O = L-arabinonate + H(+). It catalyses the reaction D-xylono-1,4-lactone + H2O = D-xylonate + H(+). The protein operates within carbohydrate degradation. In terms of biological role, pentonolactonase involved in D-arabinose and D-xylose catabolism. Catalyzes the hydrolysis of both L-arabino-gamma-lactone and D-xylono-gamma-lactone to the corresponding acids. Can also hydrolyze D-galactono-gamma-lactone and D-glucono-delta-lactone. This is Pentonolactonase XacC from Haloferax volcanii (strain ATCC 29605 / DSM 3757 / JCM 8879 / NBRC 14742 / NCIMB 2012 / VKM B-1768 / DS2) (Halobacterium volcanii).